The following is a 622-amino-acid chain: Low affinity potassium transport system protein Kup (622 aa).

Helical transmembrane passes span 9–29, 49–69, 103–123, 137–157, 165–185, 213–233, 247–267, 276–296, 337–357, 363–383, 396–416, and 419–439; these read LPAI…TSPL, VFGF…IKYL, VIMG…TPAI, PQLD…LFMI, VGQL…GLGL, VSFI…ALYA, WFTV…ALLL, PFFL…AALA, IYIP…IVSF, LAAA…ILST, FVAL…TANL, and LLSG…VMTT.

The protein belongs to the HAK/KUP transporter (TC 2.A.72) family.

It is found in the cell inner membrane. It catalyses the reaction K(+)(in) + H(+)(in) = K(+)(out) + H(+)(out). Functionally, responsible for the low-affinity transport of potassium into the cell. Likely operates as a K(+):H(+) symporter. The sequence is that of Low affinity potassium transport system protein Kup from Escherichia coli O6:K15:H31 (strain 536 / UPEC).